The primary structure comprises 225 residues: Uridylate kinase (225 aa).

Gly9 to Ser10 provides a ligand contact to ATP. Gly43 is a UMP binding site. Positions 44 and 48 each coordinate ATP. UMP-binding positions include Asp65 and Thr113–Thr119. ATP-binding residues include Thr139, Tyr145, and Asp148.

Belongs to the UMP kinase family. In terms of assembly, homohexamer.

Its subcellular location is the cytoplasm. The catalysed reaction is UMP + ATP = UDP + ADP. It participates in pyrimidine metabolism; CTP biosynthesis via de novo pathway; UDP from UMP (UMPK route): step 1/1. With respect to regulation, inhibited by UTP. In terms of biological role, catalyzes the reversible phosphorylation of UMP to UDP. The chain is Uridylate kinase from Methanobrevibacter smithii (strain ATCC 35061 / DSM 861 / OCM 144 / PS).